The primary structure comprises 59 residues: Large ribosomal subunit protein uL30 (59 aa).

It belongs to the universal ribosomal protein uL30 family. Part of the 50S ribosomal subunit.

The chain is Large ribosomal subunit protein uL30 from Clostridium botulinum (strain 657 / Type Ba4).